A 222-amino-acid polypeptide reads, in one-letter code: Glutathione-specific gamma-glutamylcyclotransferase 1 (222 aa).

Positions M1–Q22 are enriched in low complexity. Positions M1–P24 are disordered. Residue I35–S40 coordinates substrate. E115 (proton acceptor) is an active-site residue.

The protein belongs to the gamma-glutamylcyclotransferase family. ChaC subfamily. Interacts with NOTCH1 (via extracellular region).

It localises to the cytoplasm. The protein localises to the cytosol. Its subcellular location is the golgi apparatus. The protein resides in the trans-Golgi network. It carries out the reaction glutathione = L-cysteinylglycine + 5-oxo-L-proline. Catalyzes the cleavage of glutathione into 5-oxo-L-proline and a Cys-Gly dipeptide. Acts specifically on glutathione, but not on other gamma-glutamyl peptides. Glutathione depletion is an important factor for apoptosis initiation and execution. Acts as a pro-apoptotic component of the unfolded protein response pathway by mediating the pro-apoptotic effects of the ATF4-ATF3-DDIT3/CHOP cascade. Negative regulator of Notch signaling pathway involved in embryonic neurogenesis: acts by inhibiting Notch cleavage by furin, maintaining Notch in an immature inactive form, thereby promoting neurogenesis in embryos. The sequence is that of Glutathione-specific gamma-glutamylcyclotransferase 1 from Homo sapiens (Human).